Reading from the N-terminus, the 602-residue chain is Beta-(1--&gt;2)glucan export ATP-binding/permease protein NdvA (602 aa).

Residues 21–311 enclose the ABC transmembrane type-1 domain; it reads GWTLAVANLL…VVSFVNSLMM (291 aa). A run of 6 helical transmembrane segments spans residues 22 to 42, 68 to 88, 146 to 166, 167 to 187, 254 to 274, and 276 to 296; these read WTLA…PVLF, LLAA…TVAL, EHFA…YINW, RLAI…TLVV, VITR…GIAL, and QQGL…TLLI. The ABC transporter domain occupies 345–579; it reads VEFLDVSFSY…RGRFAELARA (235 aa). 378–385 serves as a coordination point for ATP; that stretch reads GATGAGKS.

Belongs to the ABC transporter superfamily. Beta-(1--&gt;2)glucan exporter (TC 3.A.1.108.1) family. As to quaternary structure, homodimer.

The protein localises to the cell inner membrane. The catalysed reaction is [(1-&gt;2)-beta-D-glucosyl](n)(in) + ATP + H2O = [(1-&gt;2)-beta-D-glucosyl](n)(out) + ADP + phosphate + H(+). In terms of biological role, involved in beta-(1--&gt;2)glucan export. Transmembrane domains (TMD) form a pore in the inner membrane and the ATP-binding domain (NBD) is responsible for energy generation. The protein is Beta-(1--&gt;2)glucan export ATP-binding/permease protein NdvA of Rhodopseudomonas palustris (strain BisB5).